The following is a 325-amino-acid chain: Biotin synthase (325 aa).

A Radical SAM core domain is found at 43–262 (CSVETAQLLS…VAVARLLMPR (220 aa)). [4Fe-4S] cluster-binding residues include C58, C62, and C65. [2Fe-2S] cluster is bound by residues C102, C133, C193, and R266.

Belongs to the radical SAM superfamily. Biotin synthase family. In terms of assembly, homodimer. [4Fe-4S] cluster is required as a cofactor. Requires [2Fe-2S] cluster as cofactor.

The catalysed reaction is (4R,5S)-dethiobiotin + (sulfur carrier)-SH + 2 reduced [2Fe-2S]-[ferredoxin] + 2 S-adenosyl-L-methionine = (sulfur carrier)-H + biotin + 2 5'-deoxyadenosine + 2 L-methionine + 2 oxidized [2Fe-2S]-[ferredoxin]. It participates in cofactor biosynthesis; biotin biosynthesis; biotin from 7,8-diaminononanoate: step 2/2. Functionally, catalyzes the conversion of dethiobiotin (DTB) to biotin by the insertion of a sulfur atom into dethiobiotin via a radical-based mechanism. This is Biotin synthase from Azorhizobium caulinodans (strain ATCC 43989 / DSM 5975 / JCM 20966 / LMG 6465 / NBRC 14845 / NCIMB 13405 / ORS 571).